A 467-amino-acid chain; its full sequence is Argininosuccinate lyase (467 aa).

Belongs to the lyase 1 family. Argininosuccinate lyase subfamily.

The protein localises to the cytoplasm. It catalyses the reaction 2-(N(omega)-L-arginino)succinate = fumarate + L-arginine. It functions in the pathway amino-acid biosynthesis; L-arginine biosynthesis; L-arginine from L-ornithine and carbamoyl phosphate: step 3/3. This chain is Argininosuccinate lyase, found in Chromohalobacter salexigens (strain ATCC BAA-138 / DSM 3043 / CIP 106854 / NCIMB 13768 / 1H11).